A 225-amino-acid chain; its full sequence is Thaumatin-like protein (225 aa).

The N-terminal stretch at 1-24 (MSTFKSLSLSALLFIAFLFTCARG) is a signal peptide. Cystine bridges form between cysteine 33-cysteine 224, cysteine 74-cysteine 84, cysteine 89-cysteine 95, cysteine 140-cysteine 213, cysteine 146-cysteine 196, cysteine 154-cysteine 164, cysteine 168-cysteine 177, and cysteine 178-cysteine 183.

The protein belongs to the thaumatin family. In terms of processing, N-glycosylated.

It is found in the secreted. Has antifungal activity against B.cinerea, C.comatus, M.arachidicola, P.piricola, C.albicans and S.carlsbergensis. Inhibits HIV-1 reverse transcriptase. This Actinidia chinensis var. chinensis (Chinese soft-hair kiwi) protein is Thaumatin-like protein.